We begin with the raw amino-acid sequence, 189 residues long: Putative manganese efflux pump MntP (189 aa).

6 helical membrane passes run 3–23, 41–61, 69–89, 105–125, 133–153, and 168–188; these read PISL…AALG, LIFG…GQVA, DHWI…YNGI, FWIL…VGVG, IVIA…IGVM, and IVGG…HLSA.

The protein belongs to the MntP (TC 9.B.29) family.

It is found in the cell inner membrane. In terms of biological role, probably functions as a manganese efflux pump. In Pseudomonas savastanoi pv. phaseolicola (strain 1448A / Race 6) (Pseudomonas syringae pv. phaseolicola (strain 1448A / Race 6)), this protein is Putative manganese efflux pump MntP.